Here is a 301-residue protein sequence, read N- to C-terminus: m7GpppX diphosphatase (301 aa).

Substrate contacts are provided by residues glutamate 154, lysine 176, and histidine 237 to histidine 248. Residues histidine 244–histidine 248 carry the Histidine triad motif motif. Histidine 246 functions as the Nucleophile in the catalytic mechanism.

The protein belongs to the HIT family.

The protein localises to the nucleus. The catalysed reaction is a 5'-end (N(7)-methyl 5'-triphosphoguanosine)-ribonucleoside in mRNA + H2O = N(7)-methyl-GMP + a 5'-end diphospho-ribonucleoside in mRNA + 2 H(+). It catalyses the reaction a 5'-end (N(2),N(2),N(7)-trimethyl 5'-triphosphoguanosine)-ribonucleoside in mRNA + H2O = (N(2),N(2),N(7))-trimethyl-GMP + a 5'-end diphospho-ribonucleoside in mRNA + 2 H(+). The hydrolytic product 7-methylguanosine diphosphate (m7GDP) efficiently inhibits the decapping scavenger activity and acts as a competitive inhibitor in vitro. Its function is as follows. Decapping scavenger enzyme that catalyzes the cleavage of a residual cap structure following the degradation of mRNAs of the 3'-&gt;5' exosome-mediated mRNA decay pathway. Hydrolyzes cap analog structures like 7-methylguanosine nucleoside triphosphate (m7GpppG) and tri-methyl guanosine nucleoside triphosphate (m3(2,2,7)GpppG) with up to 2 nucleotide substrates (small capped oligoribonucleotides) and specifically releases 5'-phosphorylated RNA fragments and 7-methylguanosine monophosphate (m7GMP). Does not hydrolyze unmethylated cap analog (GpppG) and shows no decapping activity on intact m7GpppG-capped mRNA molecules. Does not hydrolyze 7-methylguanosine diphosphate (m7GDP) and tri-methylguanosine diphosphate (m3(2,2,7)GDP) to m(7)GMP and m3(2,2,7)GMP, respectively. May also play a role in the 5'-&gt;3 mRNA decay pathway; m7GDP, the downstream product released by the 5'-&gt;3' mRNA mediated decapping activity, may be also converted by dcs-1 to m7GMP. Binds to m7GpppG and strongly to m7GDP. This Ascaris suum (Pig roundworm) protein is m7GpppX diphosphatase.